The primary structure comprises 245 residues: tRNA (guanine-N(1)-)-methyltransferase (245 aa).

S-adenosyl-L-methionine is bound by residues glycine 114 and 133-138 (LGDFVI).

It belongs to the RNA methyltransferase TrmD family. In terms of assembly, homodimer.

It is found in the cytoplasm. It catalyses the reaction guanosine(37) in tRNA + S-adenosyl-L-methionine = N(1)-methylguanosine(37) in tRNA + S-adenosyl-L-homocysteine + H(+). Specifically methylates guanosine-37 in various tRNAs. The sequence is that of tRNA (guanine-N(1)-)-methyltransferase from Pediococcus pentosaceus (strain ATCC 25745 / CCUG 21536 / LMG 10740 / 183-1w).